Here is a 529-residue protein sequence, read N- to C-terminus: Bifunctional purine biosynthesis protein PurH (529 aa).

Positions 1-148 (MQQRRPIRRA…KNHKDVAIVV (148 aa)) constitute an MGS-like domain.

It belongs to the PurH family.

The enzyme catalyses (6R)-10-formyltetrahydrofolate + 5-amino-1-(5-phospho-beta-D-ribosyl)imidazole-4-carboxamide = 5-formamido-1-(5-phospho-D-ribosyl)imidazole-4-carboxamide + (6S)-5,6,7,8-tetrahydrofolate. It catalyses the reaction IMP + H2O = 5-formamido-1-(5-phospho-D-ribosyl)imidazole-4-carboxamide. It participates in purine metabolism; IMP biosynthesis via de novo pathway; 5-formamido-1-(5-phospho-D-ribosyl)imidazole-4-carboxamide from 5-amino-1-(5-phospho-D-ribosyl)imidazole-4-carboxamide (10-formyl THF route): step 1/1. Its pathway is purine metabolism; IMP biosynthesis via de novo pathway; IMP from 5-formamido-1-(5-phospho-D-ribosyl)imidazole-4-carboxamide: step 1/1. The chain is Bifunctional purine biosynthesis protein PurH from Yersinia enterocolitica serotype O:8 / biotype 1B (strain NCTC 13174 / 8081).